The chain runs to 237 residues: Ribosomal RNA small subunit methyltransferase G (237 aa).

Residues Gly-76, Phe-81, 128–129 (VE), and Arg-147 contribute to the S-adenosyl-L-methionine site.

The protein belongs to the methyltransferase superfamily. RNA methyltransferase RsmG family.

The protein resides in the cytoplasm. Functionally, specifically methylates the N7 position of a guanine in 16S rRNA. The chain is Ribosomal RNA small subunit methyltransferase G from Prochlorococcus marinus (strain AS9601).